A 195-amino-acid polypeptide reads, in one-letter code: uncharacterized protein (195 aa).

2 disordered regions span residues Met1–Ile54 and Leu173–Ser195. Basic and acidic residues predominate over residues Lys7–Lys20. Residues Gln45–Ile54 show a composition bias toward polar residues. Positions Ser48–Gly97 form a coiled coil.

This sequence belongs to the TPD52 family.

This is an uncharacterized protein from Caenorhabditis elegans.